Reading from the N-terminus, the 356-residue chain is Adenine deaminase (356 aa).

His23, His25, and His211 together coordinate Zn(2+). The Proton donor role is filled by Glu214. Asp292 contacts Zn(2+). Asp293 provides a ligand contact to substrate.

This sequence belongs to the metallo-dependent hydrolases superfamily. Adenosine and AMP deaminases family. Adenine deaminase type 2 subfamily. Zn(2+) serves as cofactor.

It is found in the cytoplasm. The protein localises to the nucleus. The enzyme catalyses adenine + H2O + H(+) = hypoxanthine + NH4(+). In terms of biological role, catalyzes the hydrolytic deamination of adenine to hypoxanthine. Plays an important role in the purine salvage pathway and in nitrogen catabolism. The polypeptide is Adenine deaminase (Candida albicans (strain SC5314 / ATCC MYA-2876) (Yeast)).